The following is a 179-amino-acid chain: ATP-dependent protease subunit HslV (179 aa).

Threonine 8 is a catalytic residue. Residues glycine 163, cysteine 166, and threonine 169 each contribute to the Na(+) site.

The protein belongs to the peptidase T1B family. HslV subfamily. A double ring-shaped homohexamer of HslV is capped on each side by a ring-shaped HslU homohexamer. The assembly of the HslU/HslV complex is dependent on binding of ATP.

The protein localises to the cytoplasm. It carries out the reaction ATP-dependent cleavage of peptide bonds with broad specificity.. Its activity is regulated as follows. Allosterically activated by HslU binding. Protease subunit of a proteasome-like degradation complex believed to be a general protein degrading machinery. The polypeptide is ATP-dependent protease subunit HslV (Solibacter usitatus (strain Ellin6076)).